Reading from the N-terminus, the 177-residue chain is Large ribosomal subunit protein uL6 (177 aa).

It belongs to the universal ribosomal protein uL6 family. As to quaternary structure, part of the 50S ribosomal subunit.

Its function is as follows. This protein binds to the 23S rRNA, and is important in its secondary structure. It is located near the subunit interface in the base of the L7/L12 stalk, and near the tRNA binding site of the peptidyltransferase center. The polypeptide is Large ribosomal subunit protein uL6 (Bordetella bronchiseptica (strain ATCC BAA-588 / NCTC 13252 / RB50) (Alcaligenes bronchisepticus)).